The sequence spans 83 residues: Transmembrane protein EP84R (83 aa).

Transmembrane regions (helical) follow at residues 31–51 (IIGVILLVISLLFIFIGIIIL) and 59–79 (TGSIFVVLSLILGGGGFFLIY).

Belongs to the asfivirus EP84R family.

The protein localises to the virion membrane. The protein is Transmembrane protein EP84R of Ornithodoros (relapsing fever ticks).